A 1312-amino-acid chain; its full sequence is MMAHNKNDLTNINTKTTAPTTTTTEQQPEQQQQQPEQQQQEKQNNNNNNNNNNNNNNNINNNENNENNNNDIINNKINLLDELVAAAELKGRYTQIQLEELKSKLDRTSSALNVDQDTIKLAWCLLENMQLVSVDTSEQFQKQIVACSLFICGNKKFSSLLYNLNQPSSSSFQPDNNSKIKGRKIRKTNNSKNKNNDSNEEEEETTTDTEEEEEEDTLLNENNNSINKNSSNNNELLVSIRSCINESGGDSQFLQNSVFLSQLLKHFEGEIKLSQFFDTLRSFISNLRLGNAFEEQGRQLEQSFNTLNNLYRKYEQIFFTLFHPTENYILKTTQQHNYNNNSNNNNNNNNNNNNNNNNNRTNEDYLLSIGWLIFLFCKNKLFTKDSPDFVQSLHLLLCIINFIYVNTSISELKKIPQGVQIIDTATGDILLYLAKSIPCNLDDLSNVNQNIFSTYSNLLINNSILKLFDNNNNNNNNNNNNNNNSDGIKSIFNNSSIIKDNYNSLNKSYELYYYANGDIDERLFYSFDHDIYVLNNNNNNQNNNNNNNNHNNNYYNNNNNNNNNNNNNNHLNYQYSSLLPPSTPTTPSRYGSSSSSGGGGGGNLRKNIYGTPSKSLSAGNLGSVIPQTPISLTLTLESWLKVEIQNYRDPNPSLNLINILKSADQPQQTSEVDKMIERVSSLTNNTDSLFSIGGIDDHQQQQQQQQEVKQRRKNMAIQLYYCLLEKLIKFEQNTSSNINVLLNHEDFHKSLLSNSFEIIAYVYKMEGLYFPHFINVFKLHPFSYLRLIDLVLKVDADLPKLLAQHFSQIEEKILEKYVWSNNSTVFSTIKSHDFQNIFNSNGVGAAITTHLRPTQVFSTPTKNQNNNPFRNQQLINTNIPNTPTKKNPFIQNFIKKVSTLIIAKCRKLIHAMGLSSDYVVQIYQVMIKILIDETLLFKNREIDVLLICSIYAICKVNSKNITFKAIIDKSCISAKVYKEVYIGNDENNNNNNNNNNNNNNNNNNNNNNINNNNNNNENNNNNNNPVKGDIILFYNKIFLTKMDPYIHEVFSKYQQQQQHQYQQPLQNLPPPLLNQNSPKKWNPLFHTPTKNQNNNPYNSNNNTPNKFSSSIPLSPQKGVNYNSSFSVNSMVTISPMKQHTPISSSYTYIVAKSPSKELFQINQCLNKKKNDEMVPPPPTTPSSINNNNNNNNNNNNNNNNNNNNNSNDNNNNNNNNNNNNNNNNSNNNSNNNNNTEKKMVGKRLLFDYEESPSTPSSSSSPTILNNNKKNNNNNKSENVDDPGNNSPSSSPLSSSSSSSSSSSSGGRKRLKS.

Disordered stretches follow at residues 1–67 (MMAH…NNEN), 168–231 (SSSS…KNSS), 336–359 (HNYNNNSNNNNNNNNNNNNNNNNN), 536–611 (NNNN…IYGT), 987–1023 (NNNNNNNNNNNNNNNNNNNNNNINNNNNNNENNNNNN), 1168–1236 (KKND…NNTE), and 1249–1312 (EESP…RLKS). A compositionally biased stretch (low complexity) spans 10-67 (TNINTKTTAPTTTTTEQQPEQQQQQPEQQQQEKQNNNNNNNNNNNNNNNINNNENNEN). Positions 36-117 (EQQQQEKQNN…TSSALNVDQD (82 aa)) form a coiled coil. A compositionally biased stretch (polar residues) spans 168–179 (SSSSFQPDNNSK). Positions 180 to 189 (IKGRKIRKTN) are enriched in basic residues. Residues 195–230 (NNDSNEEEEETTTDTEEEEEEDTLLNENNNSINKNS) are a coiled coil. A compositionally biased stretch (acidic residues) spans 198–218 (SNEEEEETTTDTEEEEEEDTL). Low complexity-rich tracts occupy residues 219-231 (LNENNNSINKNSS), 337-359 (NYNNNSNNNNNNNNNNNNNNNNN), and 536-595 (NNNN…SSSS). 3 stretches are compositionally biased toward low complexity: residues 1185–1234 (NNNN…NNNN), 1251–1275 (SPSTPSSSSSPTILNNNKKNNNNNK), and 1286–1305 (SPSSSPLSSSSSSSSSSSSG).

Belongs to the retinoblastoma protein (RB) family.

It is found in the nucleus. Functionally, key regulator of entry into cell division. Directly involved in heterochromatin formation by maintaining overall chromatin structure and, in particular, that of constitutive heterochromatin by stabilizing histone methylation. Controls histone H4 'Lys-20' trimethylation. Probably acts as a transcription repressor by recruiting chromatin-modifying enzymes to promoters. Plays a dual role, regulating cell-cycle progression and transcriptional events leading to terminal differentiation. In the absence of a G1 phase, functions in late G2 controlling the expression of both S-phase and mitotic genes. Controls stalk/spore preference by suppressing the DIF response in cells destined for the spore pathway. DIF is a chlorinated hydroxyphenone made by cells of spore pathway that promotes stalk differentiation. This Dictyostelium discoideum (Social amoeba) protein is Retinoblastoma-like protein A.